A 261-amino-acid chain; its full sequence is Mite allergen Der p 3 (261 aa).

A signal peptide spans 1–18; sequence MIIYNILIVLLLAINTLA. A propeptide spanning residues 19 to 29 is cleaved from the precursor; the sequence is NPILPASPNAT. The region spanning 30-260 is the Peptidase S1 domain; sequence IVGGEKALAG…FIDWIESKRS (231 aa). The cysteines at positions 54 and 70 are disulfide-linked. Active-site charge relay system residues include histidine 69 and aspartate 114. 2 disulfides stabilise this stretch: cysteine 181/cysteine 198 and cysteine 210/cysteine 236. Serine 214 serves as the catalytic Charge relay system.

Belongs to the peptidase S1 family.

The protein localises to the secreted. This Dermatophagoides pteronyssinus (European house dust mite) protein is Mite allergen Der p 3 (DERP3).